An 82-amino-acid chain; its full sequence is ATP synthase subunit c, chloroplastic (82 aa).

Met-1 bears the N-formylmethionine mark. Transmembrane regions (helical) follow at residues 3–23 (PIVAATSVVSAGLAVGLAAIG) and 57–77 (FAFMESLTIYGLVVALALLFA).

Belongs to the ATPase C chain family. In terms of assembly, F-type ATPases have 2 components, F(1) - the catalytic core - and F(0) - the membrane proton channel. F(1) has five subunits: alpha(3), beta(3), gamma(1), delta(1), epsilon(1). F(0) has four main subunits: a(1), b(1), b'(1) and c(10-14). The alpha and beta chains form an alternating ring which encloses part of the gamma chain. F(1) is attached to F(0) by a central stalk formed by the gamma and epsilon chains, while a peripheral stalk is formed by the delta, b and b' chains.

It localises to the plastid. The protein localises to the chloroplast thylakoid membrane. In terms of biological role, f(1)F(0) ATP synthase produces ATP from ADP in the presence of a proton or sodium gradient. F-type ATPases consist of two structural domains, F(1) containing the extramembraneous catalytic core and F(0) containing the membrane proton channel, linked together by a central stalk and a peripheral stalk. During catalysis, ATP synthesis in the catalytic domain of F(1) is coupled via a rotary mechanism of the central stalk subunits to proton translocation. Key component of the F(0) channel; it plays a direct role in translocation across the membrane. A homomeric c-ring of between 10-14 subunits forms the central stalk rotor element with the F(1) delta and epsilon subunits. This chain is ATP synthase subunit c, chloroplastic, found in Chlamydomonas reinhardtii (Chlamydomonas smithii).